The sequence spans 89 residues: Small ribosomal subunit protein uS14 (89 aa).

The protein belongs to the universal ribosomal protein uS14 family. In terms of assembly, part of the 30S ribosomal subunit. Contacts proteins S3 and S10.

In terms of biological role, binds 16S rRNA, required for the assembly of 30S particles and may also be responsible for determining the conformation of the 16S rRNA at the A site. This chain is Small ribosomal subunit protein uS14, found in Chloroherpeton thalassium (strain ATCC 35110 / GB-78).